A 198-amino-acid chain; its full sequence is Alpha-S1-casein (198 aa).

A signal peptide spans 1-15 (MKLLILTCLVASAVA). 2 disordered regions span residues 28-47 (QTQR…LKEE) and 71-97 (SEST…EQKH). Phosphoserine occurs at positions 39, 80, 81, 83, 84, and 85.

Belongs to the alpha-casein family. As to expression, mammary gland specific. Secreted in milk.

The protein localises to the secreted. Functionally, important role in the capacity of milk to transport calcium phosphate. This is Alpha-S1-casein (CSN1S1) from Cavia porcellus (Guinea pig).